We begin with the raw amino-acid sequence, 455 residues long: MVQAMIDMDIMKGILEDSVSSSEFDESRDDETDAPTLEDEQLSEPAEPPADERIRGTQSAQGIPPPLGRIPKKSQGRSQLRSEIQFCSPLSRPRSPSPVNRYGKKIKFGTAGQNTRPPPEKRPRRRPRDRLQYGRTTRGGQCRAAPKRATRRPQVNCQRQDDDVRQGVSDAVKKLRLPASMIIDGESPRFDDSIIPRHHGACFNVFIPAPPSHVPEVFTDRDITALIRAGGKDDELINKKISAKKIDHLHRQMLSFVTSRHNQAYWVSCRRETAAAGGLQTLGAFVEEQMTWAQTVVRHGGWFDEKDIDIILDTAIFVCNAFVTRFRLLHLSCVFDKQSELALIKQVAYLVAMGNRLVEACNLLGEVKLNFRGGLLLAFVLTIPGMQSRRSISARGQELFRTLLEYYRPGDVMGLLNVIVMEHHSLCRNSECAAATRAAMGSAKFNKGLFFYPLS.

The tract at residues 17 to 163 is disordered; the sequence is DSVSSSEFDE…QVNCQRQDDD (147 aa). Residues 23 to 42 show a composition bias toward acidic residues; that stretch reads EFDESRDDETDAPTLEDEQL. The segment covering 88–98 has biased composition (low complexity); it reads SPLSRPRSPSP. 3 short sequence motifs (nuclear localization signal) span residues 101 to 107, 121 to 130, and 143 to 152; these read RYGKKIK, KRPRRRPRDR, and RAAPKRATRR. Zn(2+) is bound by residues C333, H423, C427, and C432. The CHC2-type zinc finger occupies 333 to 432; sequence CVFDKQSELA…HHSLCRNSEC (100 aa).

It belongs to the HHV-1 ICP27 protein family. Homodimer. Homodimerization is required for transactivation. Interacts with host ALYREF. Associates in a complex with RNA, and host export factors NXF1/TAP and ALYREF; these interactions allow nuclear export of viral transcripts. Interacts with protein K-bZIP/K8; this interaction promotes viral gene expression during lytic infection. Interacts with host PABPC1. Interacts with host AGO2 and TNRC6A; these interactions inhibit host P-body formation. Interacts with PRKRA and EIF2AK2/PKR; these interactions inhibit host stress granule formation. Proteolytically cleaved by host caspase-7 (CASP7), leading to its inactivation, thereby preventing expression of viral lytic genes.

Its subcellular location is the host cytoplasm. The protein localises to the host nucleus. Its function is as follows. Post-transcriptional regulator that plays an essential role in the expression of viral lytic genes and productive viral replication. Possesses numerous activities that promote the expression of viral genes including enhancement of RNA stability, promotion of RNA splicing and stimulation of protein translation often via its ability to interact with different cellular cofactors. Stabilizes polyadenylated nuclear (PAN) RNA by cooperative binding to a 9-nt core of the MRE (MTA responsive element) together with host PABPC1. Functions as a viral splicing factor and promotes expression of intron-containing viral lytic genes. Protects viral transcripts from specific nuclear RNA decay pathways by preventing host MTREX recruitment that promotes unwinding and degradation of structured RNA substrates. Plays a role in the inhibition of host P-body formation by altering the scaffolding activity of TNRC6A at the initial stage thereby enhancing virus production. Also inhibits host stress granule formation by blocking autophosphorylation of EIF2AK2/PKR and its subsequent binding to dsRNA. The polypeptide is Post-transcriptional regulator MTA (Human herpesvirus 8 type P (isolate GK18) (HHV-8)).